Here is a 398-residue protein sequence, read N- to C-terminus: Na(+)/H(+) antiporter NhaA (398 aa).

12 consecutive transmembrane segments (helical) span residues 9 to 29, 57 to 77, 95 to 115, 124 to 144, 154 to 174, 177 to 197, 204 to 224, 226 to 246, 255 to 275, 288 to 308, 329 to 349, and 359 to 379; these read MITHPAAGGVLLFAAALAAIV, LSLLVLVNDGLMAVFFLAVGL, AFPAIAALGGMVAPAVIYSLM, AGWAIPAATDIAFAVGVLALL, VFMLALAIIDDLGAIVIIALF, TALEPLALAAAGAVIGIMALM, FLSLYLLLGAVLWGCILLSGI, ATLAGVVVGGLIPLTLPSTEV, WLQPWVVYLILPLFAFANAGI, FLPLGIAAGLVVGKPLGIVLF, IAAAAMLCGIGFTMSIFIANL, and IVLAKVGILSGSVIAALLGYL.

Belongs to the NhaA Na(+)/H(+) (TC 2.A.33) antiporter family.

The protein resides in the cell inner membrane. The enzyme catalyses Na(+)(in) + 2 H(+)(out) = Na(+)(out) + 2 H(+)(in). Its function is as follows. Na(+)/H(+) antiporter that extrudes sodium in exchange for external protons. The sequence is that of Na(+)/H(+) antiporter NhaA from Sodalis glossinidius (strain morsitans).